The chain runs to 34 residues: GRCVCRKQLLCSYRERRIGDCKIRGVRFPFCCPR.

3 disulfide bridges follow: C3–C32, C5–C21, and C11–C31.

Belongs to the alpha-defensin family.

The protein resides in the secreted. In terms of biological role, microbicidal activity and inhibits corticotropin (ACTH) stimulated corticosterone production. In Oryctolagus cuniculus (Rabbit), this protein is Corticostatin-2.